The sequence spans 885 residues: MADTTVEKLATEVGKSVERLIEQFSQAGIKKGQADNVSEAEKQQLLDYLKKQHGGDNAPTKMTLQRKTVSTLSVAGNGGQSKDVKVEVRKTRTFVKRDVSDAVLKAEEEAKAKAEAEAKAKAETEAKAKAEAEAKAKVEAEAKAKAEAEAKAKAKAAAEVKVTKDTSPEAEAARIEAERLKAAQEAATKRKQAEEAAKAAEKARLLAEENSKRWAEEERQRLEAERYSDHHITTSKVARAAEDSSDMDEEKRGRRARNKNTAKTKRGGKDARDGREKHMRNRSTAPESMAHGFNKPVAAVNRDVRIGETVTVAELAHLMAVKATEIIKQMMKMGSMVTINQVLDQETAQLVAEEMGHKVVLIRENELEQQVLSERDEEGGVKLEPRAPVVTIMGHVDHGKTSLLDYIRRAKVAAGEAGGITQHIGAYHVETENGMITFLDTPGHAAFTAMRARGAKATDIVVLVVAADDGVMPQTIEAIQHAKAGNVPLIVAVNKMDKPEADIDRVKSELSQHGVMSEDWGGDNMFAFVSAKTGAGVDDLLEGILLQAEVLELKAVRDGMAAGVVIESQLDKGRGPVATILVQEGTLRQGDIVLCGLEYGKIRAMKDENGRSITEAGPSIPVEILGLSGVPSAGDEATVVRDERKAREVALYRQGKFRDVKLARQQKSKLENMFANMTEGEVKELNIVLKADVQGSLEAITDSLMGLSTDEVKVNIIARGVGALTETDATLAAASNAIMVGFNVRADAQARKTIENESVDLRYYSVIYNLIDEVKAAMTGMLSPEFKQQIIGLAEVRDVFKSPKLGAIAGCMVTEGTIKRSAPIRVLRDNVVIFEGELESLRRFKDDVNEVRNGMECGIGVKNYNDVRVGDQIEVFETVEVARTL.

Basic and acidic residues predominate over residues 123-232 (ETEAKAKAEA…EAERYSDHHI (110 aa)). Positions 123–289 (ETEAKAKAEA…RNRSTAPESM (167 aa)) are disordered. The segment covering 253–266 (GRRARNKNTAKTKR) has biased composition (basic residues). The segment covering 267–276 (GGKDARDGRE) has biased composition (basic and acidic residues). Positions 385-554 (PRAPVVTIMG…LLQAEVLELK (170 aa)) constitute a tr-type G domain. Positions 394-401 (GHVDHGKT) are G1. 394-401 (GHVDHGKT) contributes to the GTP binding site. The interval 419 to 423 (GITQH) is G2. The segment at 440–443 (DTPG) is G3. Residues 440–444 (DTPGH) and 494–497 (NKMD) contribute to the GTP site. Positions 494-497 (NKMD) are G4. A G5 region spans residues 530 to 532 (SAK).

This sequence belongs to the TRAFAC class translation factor GTPase superfamily. Classic translation factor GTPase family. IF-2 subfamily.

It is found in the cytoplasm. Functionally, one of the essential components for the initiation of protein synthesis. Protects formylmethionyl-tRNA from spontaneous hydrolysis and promotes its binding to the 30S ribosomal subunits. Also involved in the hydrolysis of GTP during the formation of the 70S ribosomal complex. This is Translation initiation factor IF-2 from Shewanella oneidensis (strain ATCC 700550 / JCM 31522 / CIP 106686 / LMG 19005 / NCIMB 14063 / MR-1).